The primary structure comprises 278 residues: Digeranylgeranylglyceryl phosphate synthase (278 aa).

Transmembrane regions (helical) follow at residues 12 to 32 (LKNC…ASYF), 34 to 54 (LAMV…CGFG), 92 to 112 (LVVM…MAVL), 129 to 149 (IIGN…GGIA), 153 to 173 (IDVT…REII), 204 to 224 (FLLI…FFGI), 226 to 246 (YMIS…KLVF), and 257 to 277 (SRNI…GSLF).

The protein belongs to the UbiA prenyltransferase family. DGGGP synthase subfamily. Mg(2+) serves as cofactor.

The protein resides in the cell membrane. The catalysed reaction is sn-3-O-(geranylgeranyl)glycerol 1-phosphate + (2E,6E,10E)-geranylgeranyl diphosphate = 2,3-bis-O-(geranylgeranyl)-sn-glycerol 1-phosphate + diphosphate. It participates in membrane lipid metabolism; glycerophospholipid metabolism. In terms of biological role, prenyltransferase that catalyzes the transfer of the geranylgeranyl moiety of geranylgeranyl diphosphate (GGPP) to the C2 hydroxyl of (S)-3-O-geranylgeranylglyceryl phosphate (GGGP). This reaction is the second ether-bond-formation step in the biosynthesis of archaeal membrane lipids. In Methanococcus maripaludis (strain DSM 14266 / JCM 13030 / NBRC 101832 / S2 / LL), this protein is Digeranylgeranylglyceryl phosphate synthase.